The primary structure comprises 543 residues: Protein lin-14 (543 aa).

2 disordered regions span residues 165–228 and 268–291; these read PNGH…SSNH and APATNGTTNGATKAAGPERKPRKP. The span at 177 to 213 shows a compositional bias: polar residues; it reads SMQTDEQQVKWSSPSSVDSNGQKTDSSAASAGDNQNI. Positions 268 to 282 are enriched in low complexity; that stretch reads APATNGTTNGATKAA.

In terms of processing, cleaved by caspase ced-3 in vitro.

It is found in the nucleus. Its function is as follows. Heterochronic protein which controls the choice of stage specific cell fates. Involved in the temporal progression of vulval fate patterning, possibly by inhibiting lin-12. Acts as a transcription factor involved in the stage-specific repression of insulin/insulin-like growth factor gene ins-33. The sequence is that of Protein lin-14 (lin-14) from Caenorhabditis briggsae.